The primary structure comprises 119 residues: Ribonuclease P protein component (119 aa).

The tract at residues 1-24 (MRGSSRFRPHEKLRASDDYQRVKR) is disordered. Over residues 8-21 (RPHEKLRASDDYQR) the composition is skewed to basic and acidic residues.

It belongs to the RnpA family. Consists of a catalytic RNA component (M1 or rnpB) and a protein subunit.

It carries out the reaction Endonucleolytic cleavage of RNA, removing 5'-extranucleotides from tRNA precursor.. In terms of biological role, RNaseP catalyzes the removal of the 5'-leader sequence from pre-tRNA to produce the mature 5'-terminus. It can also cleave other RNA substrates such as 4.5S RNA. The protein component plays an auxiliary but essential role in vivo by binding to the 5'-leader sequence and broadening the substrate specificity of the ribozyme. The protein is Ribonuclease P protein component of Syntrophobacter fumaroxidans (strain DSM 10017 / MPOB).